Reading from the N-terminus, the 473-residue chain is Photosystem II CP43 reaction center protein (473 aa).

The propeptide occupies 1 to 14 (MKTLYSLRRFYHVE). Residue threonine 15 is modified to N-acetylthreonine. Residue threonine 15 is modified to Phosphothreonine. Transmembrane regions (helical) follow at residues 69–93 (LFEVAHFVPEKPMYEQGLILLPHLA), 134–155 (LLGPETLEESFPFFGYVWKDRN), 178–200 (KALYFGGVYDTWAPGGGDVRKIT), 255–275 (KPFAWARRALVWSGEAYLSYS), and 291–312 (WFNNTAYPSEFYGPTGPEASQA). Residue glutamate 367 coordinates [CaMn4O5] cluster. The chain crosses the membrane as a helical span at residues 447–471 (RARAAAAGFEKGIDRDFEPVLSMTP).

Belongs to the PsbB/PsbC family. PsbC subfamily. In terms of assembly, PSII is composed of 1 copy each of membrane proteins PsbA, PsbB, PsbC, PsbD, PsbE, PsbF, PsbH, PsbI, PsbJ, PsbK, PsbL, PsbM, PsbT, PsbX, PsbY, PsbZ, Psb30/Ycf12, at least 3 peripheral proteins of the oxygen-evolving complex and a large number of cofactors. It forms dimeric complexes. It depends on Binds multiple chlorophylls and provides some of the ligands for the Ca-4Mn-5O cluster of the oxygen-evolving complex. It may also provide a ligand for a Cl- that is required for oxygen evolution. PSII binds additional chlorophylls, carotenoids and specific lipids. as a cofactor.

It localises to the plastid. Its subcellular location is the chloroplast thylakoid membrane. One of the components of the core complex of photosystem II (PSII). It binds chlorophyll and helps catalyze the primary light-induced photochemical processes of PSII. PSII is a light-driven water:plastoquinone oxidoreductase, using light energy to abstract electrons from H(2)O, generating O(2) and a proton gradient subsequently used for ATP formation. In Capsella bursa-pastoris (Shepherd's purse), this protein is Photosystem II CP43 reaction center protein.